The sequence spans 148 residues: Large ribosomal subunit protein bL9 (148 aa).

It belongs to the bacterial ribosomal protein bL9 family.

Functionally, binds to the 23S rRNA. The chain is Large ribosomal subunit protein bL9 from Aeromonas salmonicida (strain A449).